Consider the following 201-residue polypeptide: Alpha-1-acid glycoprotein 2 (201 aa).

Positions 1–18 (MALSWVLTVLSLLPLLEA) are cleaved as a signal peptide. At Q19 the chain carries Pyrrolidone carboxylic acid. 2 cysteine pairs are disulfide-bonded: C23-C165 and C90-C183. The N-linked (GlcNAc...) (complex) asparagine glycan is linked to N33. N56, N72, N93, and N103 each carry an N-linked (GlcNAc...) asparagine glycan.

It belongs to the calycin superfamily. Lipocalin family. In terms of processing, N-glycosylated. N-glycan heterogeneity at Asn-33: Hex5HexNAc4 (minor), Hex6HexNAc5 (major) and dHex1Hex6HexNAc5 (minor). In terms of tissue distribution, expressed by the liver and secreted in plasma.

The protein resides in the secreted. Its function is as follows. Functions as a transport protein in the blood stream. Binds various hydrophobic ligands in the interior of its beta-barrel domain. Also binds synthetic drugs and influences their distribution and availability. Appears to function in modulating the activity of the immune system during the acute-phase reaction. The protein is Alpha-1-acid glycoprotein 2 (ORM2) of Homo sapiens (Human).